The chain runs to 156 residues: MNHETFLKRAVTLACEGVNAGIGGPFGAVIVKDGAIIAEGQNNVTTSNDPTAHAEVTAIRKACKVLGAYQLDDCILYTSCEPCPMCLGAIYWARPKAVFYAAEHTDAAEAGFDDSFIYKEIDKPAEERTIPFYQVTLTEHLSPFQAWRNFANKKEY.

One can recognise a CMP/dCMP-type deaminase domain in the interval 1 to 132; that stretch reads MNHETFLKRA…KPAEERTIPF (132 aa). Zn(2+) is bound at residue histidine 53. Catalysis depends on glutamate 55, which acts as the Proton donor. Positions 83 and 86 each coordinate Zn(2+).

Belongs to the cytidine and deoxycytidylate deaminase family. It depends on Zn(2+) as a cofactor.

The enzyme catalyses guanine + H2O + H(+) = xanthine + NH4(+). The protein operates within purine metabolism; guanine degradation; xanthine from guanine: step 1/1. Functionally, catalyzes the hydrolytic deamination of guanine, producing xanthine and ammonia. In Bacillus subtilis (strain 168), this protein is Guanine deaminase (guaD).